We begin with the raw amino-acid sequence, 363 residues long: MTDRDYKIAVLPGDGIGPEVMAQAHKVLDAIEQKHGIRFSREEHDVGGIAIDNHGCPLPESTLRACEEADAVLFGSVGGPKWEHLPPNEQPERGALLPLRKHFQLFCNLRPAQIHQGLEAFSPLRADISARGFDIVVVRELTGGIYFGQPKGREGEGAHEKAFDTEVYHRFEIERIARIAFESARLRRKKVCSIDKANVLQSSILWREVVSEIAKEYPDVSLSHMYIDNATMQLIKDPAQFDVMLCSNIFGDILSDECAMITGSMGMLPSASMNESKFGLYEPAGGSAPDIAGKNIANPVAQILSAALMLRYSLGEEAAARDIENAVSQALAAGELTADLAGSKPALSTSAMGDKIASYILNS.

NAD(+) is bound at residue 79–92 (GPKWEHLPPNEQPE). Substrate-binding residues include R100, R110, R139, and D228. Residues D228, D252, and D256 each contribute to the Mg(2+) site. 286 to 298 (GSAPDIAGKNIAN) contacts NAD(+).

This sequence belongs to the isocitrate and isopropylmalate dehydrogenases family. LeuB type 1 subfamily. As to quaternary structure, homodimer. Requires Mg(2+) as cofactor. Mn(2+) is required as a cofactor.

It localises to the cytoplasm. It carries out the reaction (2R,3S)-3-isopropylmalate + NAD(+) = 4-methyl-2-oxopentanoate + CO2 + NADH. It participates in amino-acid biosynthesis; L-leucine biosynthesis; L-leucine from 3-methyl-2-oxobutanoate: step 3/4. In terms of biological role, catalyzes the oxidation of 3-carboxy-2-hydroxy-4-methylpentanoate (3-isopropylmalate) to 3-carboxy-4-methyl-2-oxopentanoate. The product decarboxylates to 4-methyl-2 oxopentanoate. This is 3-isopropylmalate dehydrogenase from Vibrio cholerae serotype O1 (strain ATCC 39315 / El Tor Inaba N16961).